We begin with the raw amino-acid sequence, 211 residues long: Ribonuclease HII (211 aa).

Residues 16 to 205 (APVCGVDEAG…VKAALAAAAV (190 aa)) form the RNase H type-2 domain. Positions 22, 23, and 114 each coordinate a divalent metal cation.

Belongs to the RNase HII family. Requires Mn(2+) as cofactor. It depends on Mg(2+) as a cofactor.

It is found in the cytoplasm. It carries out the reaction Endonucleolytic cleavage to 5'-phosphomonoester.. Its function is as follows. Endonuclease that specifically degrades the RNA of RNA-DNA hybrids. In Caulobacter vibrioides (strain ATCC 19089 / CIP 103742 / CB 15) (Caulobacter crescentus), this protein is Ribonuclease HII (rnhB).